A 224-amino-acid chain; its full sequence is NBPF family member NBPF6-like protein (224 aa).

The Olduvai domain maps to 159–224 (ENHHDRKDEE…ASVCDVQDQL (66 aa)). Positions 198–209 (YLTHSSHHDSHR) are enriched in basic and acidic residues. Positions 198 to 224 (YLTHSSHHDSHRPPSSIASVCDVQDQL) are disordered.

It belongs to the NBPF family.

The polypeptide is NBPF family member NBPF6-like protein (Bos taurus (Bovine)).